Here is a 1022-residue protein sequence, read N- to C-terminus: Antigenic heat-stable 120 kDa protein (1022 aa).

Residues 1-33 form a disordered region; it reads MSKNGNQDISEFDPLNREFTEAEKQQQMQQEQE. The segment covering 14-24 has biased composition (basic and acidic residues); sequence PLNREFTEAEK.

Its subcellular location is the cytoplasm. The polypeptide is Antigenic heat-stable 120 kDa protein (sca4) (Rickettsia prowazekii (strain Madrid E)).